The following is a 427-amino-acid chain: Adenylosuccinate synthetase (427 aa).

GTP contacts are provided by residues 12–18 and 40–42; these read GDEGKGK and GHT. The active-site Proton acceptor is Asp-13. 2 residues coordinate Mg(2+): Asp-13 and Gly-40. IMP contacts are provided by residues 13-16, 38-41, Thr-128, Arg-142, Gln-223, Thr-238, and Arg-302; these read DEGK and NAGH. His-41 (proton donor) is an active-site residue. 298 to 304 provides a ligand contact to substrate; that stretch reads TTTGRPR. GTP-binding positions include Arg-304, 330–332, and 412–414; these read KLD and SVG.

The protein belongs to the adenylosuccinate synthetase family. Homodimer. Requires Mg(2+) as cofactor.

Its subcellular location is the cytoplasm. The enzyme catalyses IMP + L-aspartate + GTP = N(6)-(1,2-dicarboxyethyl)-AMP + GDP + phosphate + 2 H(+). Its pathway is purine metabolism; AMP biosynthesis via de novo pathway; AMP from IMP: step 1/2. Functionally, plays an important role in the de novo pathway of purine nucleotide biosynthesis. Catalyzes the first committed step in the biosynthesis of AMP from IMP. In Carboxydothermus hydrogenoformans (strain ATCC BAA-161 / DSM 6008 / Z-2901), this protein is Adenylosuccinate synthetase.